The sequence spans 310 residues: Uridine phosphorylase 1 (310 aa).

Phosphate contacts are provided by residues glycine 60, arginine 94, and 138 to 141; that span reads RIGT. Uridine-binding positions include 142–143 and 217–219; these read SG and QGR.

It belongs to the PNP/UDP phosphorylase family. Homodimer.

The enzyme catalyses uridine + phosphate = alpha-D-ribose 1-phosphate + uracil. The catalysed reaction is 2'-deoxyuridine + phosphate = 2-deoxy-alpha-D-ribose 1-phosphate + uracil. The protein operates within pyrimidine metabolism; UMP biosynthesis via salvage pathway; uracil from uridine (phosphorylase route): step 1/1. Catalyzes the reversible phosphorylytic cleavage of uridine to uracil and ribose-1-phosphate which can then be utilized as carbon and energy sources or in the rescue of pyrimidine bases for nucleotide synthesis. Shows broad substrate specificity and can also accept deoxyuridine and other analogous compounds. This is Uridine phosphorylase 1 from Homo sapiens (Human).